A 175-amino-acid polypeptide reads, in one-letter code: Shikimate kinase (175 aa).

11 to 16 (GAGKTT) contacts ATP. Thr15 is a Mg(2+) binding site. The substrate site is built by Asp33, Arg57, and Gly79. Residue Arg118 participates in ATP binding. Arg140 contributes to the substrate binding site.

This sequence belongs to the shikimate kinase family. As to quaternary structure, monomer. Mg(2+) serves as cofactor.

It is found in the cytoplasm. The catalysed reaction is shikimate + ATP = 3-phosphoshikimate + ADP + H(+). Its pathway is metabolic intermediate biosynthesis; chorismate biosynthesis; chorismate from D-erythrose 4-phosphate and phosphoenolpyruvate: step 5/7. Catalyzes the specific phosphorylation of the 3-hydroxyl group of shikimic acid using ATP as a cosubstrate. This chain is Shikimate kinase, found in Phocaeicola vulgatus (strain ATCC 8482 / DSM 1447 / JCM 5826 / CCUG 4940 / NBRC 14291 / NCTC 11154) (Bacteroides vulgatus).